We begin with the raw amino-acid sequence, 1503 residues long: Chromosome partition protein MukB (1503 aa).

Residues 1–19 (MMNTNELFDQTAVNSSQDK) are compositionally biased toward polar residues. The tract at residues 1–21 (MMNTNELFDQTAVNSSQDKPL) is disordered. 65–72 (GGNGAGKS) contributes to the ATP binding site. Coiled-coil stretches lie at residues 370-495 (MNAL…QRLS), 536-616 (DQKM…HRQQ), 662-697 (MQEMLRKEREATLERDELARTEAALASQISQLSQAD), 865-1173 (EMLM…SAEE), and 1238-1293 (DAIE…LQNI). The flexible hinge stretch occupies residues 696 to 813 (ADGAEDIRLN…EVPLFGRAAR (118 aa)).

This sequence belongs to the SMC family. MukB subfamily. As to quaternary structure, homodimerization via its hinge domain. Binds to DNA via its C-terminal region. Interacts, and probably forms a ternary complex, with MukE and MukF via its C-terminal region. The complex formation is stimulated by calcium or magnesium. Interacts with tubulin-related protein FtsZ.

It is found in the cytoplasm. It localises to the nucleoid. Its function is as follows. Plays a central role in chromosome condensation, segregation and cell cycle progression. Functions as a homodimer, which is essential for chromosome partition. Involved in negative DNA supercoiling in vivo, and by this means organize and compact chromosomes. May achieve or facilitate chromosome segregation by condensation DNA from both sides of a centrally located replisome during cell division. The protein is Chromosome partition protein MukB of Haemophilus ducreyi (strain 35000HP / ATCC 700724).